Consider the following 281-residue polypeptide: 2-dehydro-3-deoxyphosphooctonate aldolase (281 aa).

Belongs to the KdsA family.

Its subcellular location is the cytoplasm. The enzyme catalyses D-arabinose 5-phosphate + phosphoenolpyruvate + H2O = 3-deoxy-alpha-D-manno-2-octulosonate-8-phosphate + phosphate. Its pathway is carbohydrate biosynthesis; 3-deoxy-D-manno-octulosonate biosynthesis; 3-deoxy-D-manno-octulosonate from D-ribulose 5-phosphate: step 2/3. The protein operates within bacterial outer membrane biogenesis; lipopolysaccharide biosynthesis. The sequence is that of 2-dehydro-3-deoxyphosphooctonate aldolase from Pseudomonas syringae pv. tomato (strain ATCC BAA-871 / DC3000).